A 378-amino-acid chain; its full sequence is MTQTSQRPLRVLAAMSGGVDSAVAAARAAEAGHDVTGVHLALSANPQSFRTGARGCCTIEDSRDARRAADVIGIPFYVWDLAERFREDVVEDFVAEYEAGRTPNPCLRCNEKIKFAALLDKALALGFDAVCTGHYATVVLAEDGSRELHRASDMAKDQSYVLGVLDEKQLAHAMFPLGDTLTTKDEIRAEAERRGLAVAKKPDSHDICFIADGDTQGFLANRLGGPAEGDILDESGTKLGTHEGAFGFTIGQRKGLKIGHPAPDGKPRYVLDISPVNNTVTVGPVEALDVTALTAIKPRWCGTPPSGPGTYTAQLRAHGGESEVTAELVDGTELNVTFTEPVRGVAPGQAVVLYDGTRVVGSATIATTVRRERVATGG.

ATP-binding positions include 14 to 21 (AMSGGVDS) and Leu-40. The active-site Nucleophile is Cys-109. An intrachain disulfide couples Cys-109 to Cys-208. Gly-133 provides a ligand contact to ATP. Positions 156–158 (KDQ) are interaction with tRNA. Cys-208 acts as the Cysteine persulfide intermediate in catalysis.

The protein belongs to the MnmA/TRMU family.

The protein localises to the cytoplasm. The enzyme catalyses S-sulfanyl-L-cysteinyl-[protein] + uridine(34) in tRNA + AH2 + ATP = 2-thiouridine(34) in tRNA + L-cysteinyl-[protein] + A + AMP + diphosphate + H(+). Functionally, catalyzes the 2-thiolation of uridine at the wobble position (U34) of tRNA, leading to the formation of s(2)U34. The protein is tRNA-specific 2-thiouridylase MnmA of Streptomyces griseus subsp. griseus (strain JCM 4626 / CBS 651.72 / NBRC 13350 / KCC S-0626 / ISP 5235).